Here is a 198-residue protein sequence, read N- to C-terminus: Glycerol-3-phosphate acyltransferase (198 aa).

Transmembrane regions (helical) follow at residues 5–25 (LILL…LWIG), 56–76 (SIVT…PFFF), 84–104 (FWLL…FAGF), 114–134 (AGVI…VFLV), and 158–178 (LFMG…FVIW).

It belongs to the PlsY family. In terms of assembly, probably interacts with PlsX.

Its subcellular location is the cell membrane. The enzyme catalyses an acyl phosphate + sn-glycerol 3-phosphate = a 1-acyl-sn-glycero-3-phosphate + phosphate. It participates in lipid metabolism; phospholipid metabolism. Its function is as follows. Catalyzes the transfer of an acyl group from acyl-phosphate (acyl-PO(4)) to glycerol-3-phosphate (G3P) to form lysophosphatidic acid (LPA). This enzyme utilizes acyl-phosphate as fatty acyl donor, but not acyl-CoA or acyl-ACP. The chain is Glycerol-3-phosphate acyltransferase from Listeria monocytogenes serotype 4b (strain CLIP80459).